The primary structure comprises 203 residues: Ribosomal RNA small subunit methyltransferase G (203 aa).

Residues G73, L78, 124–125 (VE), and R139 contribute to the S-adenosyl-L-methionine site.

The protein belongs to the methyltransferase superfamily. RNA methyltransferase RsmG family.

It localises to the cytoplasm. It carries out the reaction guanosine(527) in 16S rRNA + S-adenosyl-L-methionine = N(7)-methylguanosine(527) in 16S rRNA + S-adenosyl-L-homocysteine. Functionally, specifically methylates the N7 position of guanine in position 527 of 16S rRNA. In Haemophilus influenzae (strain PittEE), this protein is Ribosomal RNA small subunit methyltransferase G.